Consider the following 503-residue polypeptide: ATP synthase subunit alpha (503 aa).

Gly-170–Thr-177 contacts ATP.

This sequence belongs to the ATPase alpha/beta chains family. In terms of assembly, F-type ATPases have 2 components, CF(1) - the catalytic core - and CF(0) - the membrane proton channel. CF(1) has five subunits: alpha(3), beta(3), gamma(1), delta(1), epsilon(1). CF(0) has three main subunits: a(1), b(2) and c(9-12). The alpha and beta chains form an alternating ring which encloses part of the gamma chain. CF(1) is attached to CF(0) by a central stalk formed by the gamma and epsilon chains, while a peripheral stalk is formed by the delta and b chains.

The protein resides in the cell inner membrane. The catalysed reaction is ATP + H2O + 4 H(+)(in) = ADP + phosphate + 5 H(+)(out). In terms of biological role, produces ATP from ADP in the presence of a proton gradient across the membrane. The alpha chain is a regulatory subunit. This Helicobacter pylori (strain Shi470) protein is ATP synthase subunit alpha.